The following is a 236-amino-acid chain: NAD(P)H-hydrate epimerase (236 aa).

Residues 11 to 217 (AAALDRELMS…SIAKKYDFDV (207 aa)) form the YjeF N-terminal domain. 61 to 65 (NNGGD) contacts (6S)-NADPHX. Residues Asn-62 and Asp-123 each contribute to the K(+) site. Residues 127–133 (GFSFSGE) and Asp-156 contribute to the (6S)-NADPHX site. Ser-159 contributes to the K(+) binding site.

It belongs to the NnrE/AIBP family. The cofactor is K(+).

It is found in the cytoplasm. The protein resides in the mitochondrion. The catalysed reaction is (6R)-NADHX = (6S)-NADHX. It catalyses the reaction (6R)-NADPHX = (6S)-NADPHX. Catalyzes the epimerization of the S- and R-forms of NAD(P)HX, a damaged form of NAD(P)H that is a result of enzymatic or heat-dependent hydration. This is a prerequisite for the S-specific NAD(P)H-hydrate dehydratase to allow the repair of both epimers of NAD(P)HX. This chain is NAD(P)H-hydrate epimerase, found in Neurospora crassa (strain ATCC 24698 / 74-OR23-1A / CBS 708.71 / DSM 1257 / FGSC 987).